A 1192-amino-acid polypeptide reads, in one-letter code: Protein WWC2 (1192 aa).

WW domains follow at residues 10–43 and 57–90; these read LPLPRGWEEARDYDGKVFYIDHNTRRTSWIDPRD and DELPWGWEAGFDPQIGVYYIDHINKTTQIEDPRK. Coiled coils occupy residues 121-194 and 224-256; these read KEQR…YKEQ and ELKSIRKAISSGEKEKQDLMQSLAKLQERFHLD. Ser-286 is subject to Phosphoserine. A coiled-coil region spans residues 302-421; it reads LAEKVRLSLQ…KLEETTKLTT (120 aa). Residues 441 to 462 are disordered; it reads SSLGSLASSRGSLNTSSRGSLN. A C2 domain is found at 698–821; that stretch reads ETAQVQIGLR…FSSEVFTLWY (124 aa). The stretch at 859–887 forms a coiled coil; it reads ALLARTSAELLAVEQELAQEEEEESGQEE. Disordered stretches follow at residues 873–895 and 911–991; these read QELAQEEEEESGQEEPRGPDGDW and EAEV…SRQH. A compositionally biased stretch (acidic residues) spans 875–885; that stretch reads LAQEEEEESGQ. Over residues 923-933 the composition is skewed to polar residues; sequence TEDLSSCTSVP. Over residues 938 to 951 the composition is skewed to basic and acidic residues; sequence DGNRKESNCAKDLR. A Phosphothreonine modification is found at Thr-1004. A Phosphoserine modification is found at Ser-1022. An interaction with PRKCZ region spans residues 1031 to 1050; that stretch reads SLFVRNSTERRSLRVKRTVC. Residues 1068-1144 adopt a coiled-coil conformation; sequence DLELDLQASL…EQKQGLNAEK (77 aa). Residues 1124 to 1137 show a composition bias toward basic and acidic residues; the sequence is QAEKQAEQSKEEQK. Residues 1124–1143 form a disordered region; sequence QAEKQAEQSKEEQKQGLNAE.

It belongs to the WWC family. As to quaternary structure, forms homodimers and heterodimers with WWC1 and WWC3. Interacts with DLC1 and PRKCZ. Interacts (via WW domains) with LATS1 and LATS2.

It localises to the cytoplasm. The protein localises to the cytosol. In terms of biological role, regulator of the Hippo signaling pathway, also known as the Salvador-Warts-Hippo (SWH) pathway. Enhances phosphorylation of LATS1 and YAP1 and negatively regulates cell proliferation and organ growth due to a suppression of the transcriptional activity of YAP1, the major effector of the Hippo pathway. The polypeptide is Protein WWC2 (Homo sapiens (Human)).